We begin with the raw amino-acid sequence, 164 residues long: UPF0305 protein MJ0646 (164 aa).

This sequence belongs to the UPF0305 family.

The polypeptide is UPF0305 protein MJ0646 (Methanocaldococcus jannaschii (strain ATCC 43067 / DSM 2661 / JAL-1 / JCM 10045 / NBRC 100440) (Methanococcus jannaschii)).